Consider the following 228-residue polypeptide: Ribosomal RNA small subunit methyltransferase G (228 aa).

Residues glycine 89, leucine 94, 140 to 141 (VE), and arginine 159 each bind S-adenosyl-L-methionine.

It belongs to the methyltransferase superfamily. RNA methyltransferase RsmG family.

Its subcellular location is the cytoplasm. The catalysed reaction is guanosine(527) in 16S rRNA + S-adenosyl-L-methionine = N(7)-methylguanosine(527) in 16S rRNA + S-adenosyl-L-homocysteine. Functionally, specifically methylates the N7 position of guanine in position 527 of 16S rRNA. This chain is Ribosomal RNA small subunit methyltransferase G, found in Burkholderia cenocepacia (strain ATCC BAA-245 / DSM 16553 / LMG 16656 / NCTC 13227 / J2315 / CF5610) (Burkholderia cepacia (strain J2315)).